A 552-amino-acid polypeptide reads, in one-letter code: MPSGRLQQQFIRLWQCCDGKTQDTTLNELADLLNCSRRHMRTLLNTMQARGWLTWEAEVGRGKRSRLTFLYTGLALQQQRAEDLLEQDRIDQLVQLVGDKSAVRQMLISHLGRSFRQGRHILRVLYYRPMHNLLPGTALRRSETHIARQIFSSLTRVNEENGELEADIAHHWQQISPLLWRFYLRPGIHFHHGRELEMEDVISSLTRINTLPLYSHITKIDSPTAWTLDIHLSQPDRWLPWLLGQVPAMILPRKWETLANFASHPIGTGPYAVRRNTPNQLKILAFDDYFGYRALIDEVNVWVLPDISEEPACGLMLEGPIQGGEKAIESRLEEGCYYLLFDARTPRGAHPQVREWVSHVLSPTNLLYHADEPLQQLWFPAYGLLPRWHHARPGPGEKPAGLETLTLTFYREHIEHRVIARIMSALLAEHQVHLHIQEIDYDQWHAGEIESDIWLNSANFTLPLDFSLFAHLCEVPLLQNCIPRDWQGDAAQWRAGEMNLANWCQQLLANKAIVPLIHHWLIIQGQRSMRGLRMNTLGWFDFKSAWFAPPDP.

An HTH marR-type domain is found at 1 to 116 (MPSGRLQQQF…LISHLGRSFR (116 aa)). Residues 26–49 (LNELADLLNCSRRHMRTLLNTMQA) constitute a DNA-binding region (H-T-H motif). A solute-binding region spans residues 163–493 (ELEADIAHHW…RDWQGDAAQW (331 aa)).

Functionally, activates the small RNA gene sgrS under glucose-phosphate stress conditions as well as yfdZ. Represses its own transcription under both stress and non-stress conditions. Might act as a sensor of the intracellular accumulation of phosphoglucose by binding these molecules in its C-terminal solute-binding domain. The chain is HTH-type transcriptional regulator SgrR from Salmonella typhimurium (strain LT2 / SGSC1412 / ATCC 700720).